The following is a 71-amino-acid chain: uncharacterized protein (71 aa).

The interval 1–71 (MLFETLKSLS…AFFSRPFYSE (71 aa)) is disordered. Residues 7 to 33 (KSLSQQNGGQFSDEQSFESPISSSFNG) are compositionally biased toward polar residues. Residues 35 to 65 (SMPFGSPSSTMSSSYKGNTNSSTKSSSAFFS) show a composition bias toward low complexity.

This is an uncharacterized protein from Dictyostelium discoideum (Social amoeba).